Reading from the N-terminus, the 784-residue chain is Toll-like receptor 2 (784 aa).

An N-terminal signal peptide occupies residues 1–18 (MPHTLWMVWVLGVIISLS). The Extracellular portion of the chain corresponds to 19 to 587 (KEESSNQASL…VRLSVSECHR (569 aa)). A disulfide bridge connects residues cysteine 30 and cysteine 36. LRR repeat units lie at residues 54–77 (VKSL…RYVN), 78–101 (LQAL…SLGR), 102–125 (LEHL…PLSS), 126–150 (LKFL…HLTK), 151–175 (LRIL…GLTF), 176–199 (LEEL…SIQN), 200–223 (VSHL…LTSS), 224–250 (VECL…TNSL), 251–278 (IKKF…QISG), 279–308 (LLEL…DPGK), 309–337 (VETV…LTER), 338–361 (VKRI…HLKS), 362–388 (LEYL…AWPS), 389–414 (LQTL…TLKN), 415–437 (LTNL…WPEK), 438–457 (MKYL…CIPK), 458–478 (TLEI…NLPQ), 479–500 (LKEL…LLPM), and 501–524 (LLVL…SFHT). A glycan (N-linked (GlcNAc...) asparagine) is linked at asparagine 114. N-linked (GlcNAc...) asparagine glycosylation occurs at asparagine 199. Cysteine 353 and cysteine 382 are oxidised to a cystine. Asparagine 414 carries an N-linked (GlcNAc...) asparagine glycan. A disulfide bridge links cysteine 432 with cysteine 454. Asparagine 442 carries N-linked (GlcNAc...) asparagine glycosylation. One can recognise an LRRCT domain in the interval 525–579 (LKTLEAGGNNFICSCEFLSFTQEQQALAKVLVDWPANYLCDSPSHVRGQRVQDVR). The helical transmembrane segment at 588–608 (AALVSGMCCALFLLILLMGVL) threads the bilayer. Over 609 to 784 (CHRFHGLWYM…WVNLRAAIKS (176 aa)) the chain is Cytoplasmic. Residues 639–782 (ICYDAFVSYS…GFWVNLRAAI (144 aa)) form the TIR domain. Residue lysine 754 forms a Glycyl lysine isopeptide (Lys-Gly) (interchain with G-Cter in ubiquitin) linkage. Positions 761-778 (YLEWPMDEARQEGFWVNL) match the ATG16L1-binding motif motif.

The protein belongs to the Toll-like receptor family. Interacts with LY96, TLR1 and TLR6 (via extracellular domain). TLR2 seems to exist in heterodimers with either TLR1 or TLR6 before stimulation by the ligand. The heterodimers form bigger oligomers in response to their corresponding ligands as well as further heterotypic associations with other receptors such as CD14 and/or CD36. Binds MYD88 (via TIR domain). Interacts with TICAM1. Interacts with CNPY3. Interacts with ATG16L1. Interacts with PPP1R11. Interacts with TICAM2. Interacts with TIRAP. Ubiquitinated at Lys-754 by PPP1R11, leading to its degradation. Deubiquitinated by USP2. Post-translationally, glycosylation of Asn-442 is critical for secretion of the N-terminal ectodomain of TLR2.

The protein resides in the membrane. It localises to the cytoplasmic vesicle. It is found in the phagosome membrane. The protein localises to the membrane raft. Its function is as follows. Cooperates with LY96 to mediate the innate immune response to bacterial lipoproteins and other microbial cell wall components. Cooperates with TLR1 or TLR6 to mediate the innate immune response to bacterial lipoproteins or lipopeptides. Acts via MYD88 and TRAF6, leading to NF-kappa-B activation, cytokine secretion and the inflammatory response. May also promote apoptosis in response to lipoproteins. Forms activation clusters composed of several receptors depending on the ligand, these clusters trigger signaling from the cell surface and subsequently are targeted to the Golgi in a lipid-raft dependent pathway. Forms the cluster TLR2:TLR6:CD14:CD36 in response to diacylated lipopeptides and TLR2:TLR1:CD14 in response to triacylated lipopeptides. The protein is Toll-like receptor 2 (TLR2) of Macaca fascicularis (Crab-eating macaque).